A 676-amino-acid chain; its full sequence is Lon-like protease BrxL (676 aa).

This sequence belongs to the BrxL family.

In terms of biological role, BREX systems (bacteriophage exclusion) provide immunity against bacteriophage. Part of a type 1 BREX system. This system allows phage adsorption but prevents phage DNA replication, without degradation of the phage DNA. Methylation of bacterial DNA by PglX probably guides self/non-self discrimination. When the brxA-brxB-brxC-pglX and pglZ-brxL operons are transformed into a susceptible B.subtilis strain (BEST7003) they confer resistance to bacteriophages SPbeta, SP16, Zeta, phi3T and SP02 and partial protection to phages SP01 and SP82G (these include lytic and temperate phage). They do not protect against phages phi105, rho10 or rho14. Additionally confers a very slight reduction in efficiency of plasmid transformation. In Bacillus cereus (strain H3081.97), this protein is Lon-like protease BrxL.